The following is a 185-amino-acid chain: Peptidyl-tRNA hydrolase (185 aa).

Tyrosine 14 contributes to the tRNA binding site. Histidine 19 serves as the catalytic Proton acceptor. Residues phenylalanine 64, asparagine 66, and asparagine 112 each coordinate tRNA.

It belongs to the PTH family. Monomer.

The protein localises to the cytoplasm. The enzyme catalyses an N-acyl-L-alpha-aminoacyl-tRNA + H2O = an N-acyl-L-amino acid + a tRNA + H(+). Functionally, hydrolyzes ribosome-free peptidyl-tRNAs (with 1 or more amino acids incorporated), which drop off the ribosome during protein synthesis, or as a result of ribosome stalling. Its function is as follows. Catalyzes the release of premature peptidyl moieties from peptidyl-tRNA molecules trapped in stalled 50S ribosomal subunits, and thus maintains levels of free tRNAs and 50S ribosomes. The protein is Peptidyl-tRNA hydrolase of Lacticaseibacillus paracasei (strain ATCC 334 / BCRC 17002 / CCUG 31169 / CIP 107868 / KCTC 3260 / NRRL B-441) (Lactobacillus paracasei).